The primary structure comprises 372 residues: Chaperone protein DnaJ (372 aa).

The J domain maps to 5–70 (DYYDVLGVER…QKRANYDQYG (66 aa)). The CR-type zinc finger occupies 130 to 208 (GTTKDIQINT…CHGDGRVHKK (79 aa)). The Zn(2+) site is built by cysteine 143, cysteine 146, cysteine 160, cysteine 163, cysteine 182, cysteine 185, cysteine 196, and cysteine 199. CXXCXGXG motif repeat units lie at residues 143-150 (CDSCDGSG), 160-167 (CSTCHGAG), 182-189 (CPSCHGSG), and 196-203 (CKSCHGDG).

The protein belongs to the DnaJ family. Homodimer. It depends on Zn(2+) as a cofactor.

The protein resides in the cytoplasm. In terms of biological role, participates actively in the response to hyperosmotic and heat shock by preventing the aggregation of stress-denatured proteins and by disaggregating proteins, also in an autonomous, DnaK-independent fashion. Unfolded proteins bind initially to DnaJ; upon interaction with the DnaJ-bound protein, DnaK hydrolyzes its bound ATP, resulting in the formation of a stable complex. GrpE releases ADP from DnaK; ATP binding to DnaK triggers the release of the substrate protein, thus completing the reaction cycle. Several rounds of ATP-dependent interactions between DnaJ, DnaK and GrpE are required for fully efficient folding. Also involved, together with DnaK and GrpE, in the DNA replication of plasmids through activation of initiation proteins. This chain is Chaperone protein DnaJ, found in Pasteurella multocida (strain Pm70).